A 123-amino-acid polypeptide reads, in one-letter code: MPTINQLVRKGRQKPVYVNKVPALEACPQKRGVCTRVYTTTPKKPNSALRKVCKVRLTNGFEVISYIGGEGHNLQEHSVVLIRGGRVKDLPGVRYHTVRGSLDTAGVKDRKQARSKYGAKRPK.

The residue at position 89 (aspartate 89) is a 3-methylthioaspartic acid. The tract at residues 104–123 is disordered; sequence TAGVKDRKQARSKYGAKRPK. Over residues 113-123 the composition is skewed to basic residues; that stretch reads ARSKYGAKRPK.

Belongs to the universal ribosomal protein uS12 family. In terms of assembly, part of the 30S ribosomal subunit. Contacts proteins S8 and S17. May interact with IF1 in the 30S initiation complex.

In terms of biological role, with S4 and S5 plays an important role in translational accuracy. Its function is as follows. Interacts with and stabilizes bases of the 16S rRNA that are involved in tRNA selection in the A site and with the mRNA backbone. Located at the interface of the 30S and 50S subunits, it traverses the body of the 30S subunit contacting proteins on the other side and probably holding the rRNA structure together. The combined cluster of proteins S8, S12 and S17 appears to hold together the shoulder and platform of the 30S subunit. This is Small ribosomal subunit protein uS12 from Neisseria meningitidis serogroup C (strain 053442).